Here is a 391-residue protein sequence, read N- to C-terminus: Aspartic protease 17 (391 aa).

Positions 1–15 (MHLIFLLFLAPFCSA) are cleaved as a signal peptide. The 321-residue stretch at 65–385 (YLGNFTVGTP…DIGNARIGFA (321 aa)) folds into the Peptidase A1 domain. Asn68 carries N-linked (GlcNAc...) asparagine glycosylation. Asp83 is a catalytic residue. Residue Asn108 is glycosylated (N-linked (GlcNAc...) asparagine). Asp274 is an active-site residue. The cysteines at positions 309 and 345 are disulfide-linked.

It belongs to the peptidase A1 family. In terms of tissue distribution, expressed in intestinal cells.

The protein resides in the secreted. Functionally, aspartic proteinase. This Caenorhabditis elegans protein is Aspartic protease 17.